We begin with the raw amino-acid sequence, 362 residues long: Divinyl chlorophyll a/b light-harvesting protein PcbF (362 aa).

6 helical membrane-spanning segments follow: residues 27–47 (FIGSHVAHTGLICFAAGANTL), 89–109 (IAFIGVFHLICSMVYAGAGLL), 150–170 (FILGHHLIFFGVACIWFVEWA), 211–231 (VMGGHAFLAFVEITGGAFHIA), 251–271 (AVLSWSLAGIGWMAIIAAFWC), and 316–336 (LANVHYYLGFFFIQGHLWHAI).

Belongs to the PsbB/PsbC family. IsiA/Pcb subfamily. In terms of assembly, the antenna complex consists of divinyl chlorophylls (a and b) and divinyl chlorophyll a/b binding proteins and binds more divinyl chlorophyll b than does the antenna complex from high-light-adapted Prochlorococcus. The cofactor is divinyl chlorophyll a. Divinyl chlorophyll b serves as cofactor.

The protein localises to the cellular thylakoid membrane. The antenna complex functions as a light receptor, it captures and delivers excitation energy to photosystems II and I. The Prochlorales pcb genes are not related to higher plant LHCs. In Prochlorococcus marinus (strain NATL2A), this protein is Divinyl chlorophyll a/b light-harvesting protein PcbF (pcbF).